Reading from the N-terminus, the 215-residue chain is Cytochrome b6 (215 aa).

The chain crosses the membrane as a helical span at residues 32–52 (IFYCLGGITLTCFLVQVATGF). Cys-35 contacts heme c. Residues His-86 and His-100 each coordinate heme b. The next 3 helical transmembrane spans lie at 90-110 (ASMM…TGGF), 116-136 (LTWV…VTGY), and 186-206 (LHTF…FPMI). Positions 187 and 202 each coordinate heme b.

Belongs to the cytochrome b family. PetB subfamily. As to quaternary structure, the 4 large subunits of the cytochrome b6-f complex are cytochrome b6, subunit IV (17 kDa polypeptide, PetD), cytochrome f and the Rieske protein, while the 4 small subunits are PetG, PetL, PetM and PetN. The complex functions as a dimer. Requires heme b as cofactor. Heme c serves as cofactor.

It localises to the plastid. Its subcellular location is the chloroplast thylakoid membrane. Component of the cytochrome b6-f complex, which mediates electron transfer between photosystem II (PSII) and photosystem I (PSI), cyclic electron flow around PSI, and state transitions. The chain is Cytochrome b6 from Liriodendron tulipifera (Tuliptree).